The following is a 288-amino-acid chain: Probable endonuclease 4 (288 aa).

Residues H75, H115, E153, D187, H190, H224, D237, H239, and E269 each contribute to the Zn(2+) site.

This sequence belongs to the AP endonuclease 2 family. It depends on Zn(2+) as a cofactor.

It catalyses the reaction Endonucleolytic cleavage to 5'-phosphooligonucleotide end-products.. Endonuclease IV plays a role in DNA repair. It cleaves phosphodiester bonds at apurinic or apyrimidinic (AP) sites, generating a 3'-hydroxyl group and a 5'-terminal sugar phosphate. The protein is Probable endonuclease 4 of Chlamydia trachomatis serovar A (strain ATCC VR-571B / DSM 19440 / HAR-13).